The sequence spans 262 residues: Sperm microtubule inner protein 6 (262 aa).

Belongs to the SPMIP6 family. As to quaternary structure, microtubule inner protein component of sperm flagellar doublet microtubules. Interacts with alpha-tubulin.

The protein resides in the cytoplasm. It is found in the cytoskeleton. Its subcellular location is the nucleus. It localises to the mitochondrion. The protein localises to the flagellum axoneme. Its function is as follows. May participate in intramanchette transport and midpiece formation of the sperm tail. May play a potential role in somatic cell proliferation. The chain is Sperm microtubule inner protein 6 (SPMIP6) from Macaca fascicularis (Crab-eating macaque).